The chain runs to 112 residues: Transmembrane protein 14C (112 aa).

4 helical membrane-spanning segments follow: residues V7–I27, A32–A52, V62–H82, and F86–S106.

Belongs to the TMEM14 family.

It is found in the mitochondrion membrane. Its function is as follows. Required for normal heme biosynthesis. The sequence is that of Transmembrane protein 14C (TMEM14C) from Pongo abelii (Sumatran orangutan).